Consider the following 337-residue polypeptide: Phosphate acyltransferase (337 aa).

This sequence belongs to the PlsX family. As to quaternary structure, homodimer. Probably interacts with PlsY.

Its subcellular location is the cytoplasm. It carries out the reaction a fatty acyl-[ACP] + phosphate = an acyl phosphate + holo-[ACP]. It functions in the pathway lipid metabolism; phospholipid metabolism. Functionally, catalyzes the reversible formation of acyl-phosphate (acyl-PO(4)) from acyl-[acyl-carrier-protein] (acyl-ACP). This enzyme utilizes acyl-ACP as fatty acyl donor, but not acyl-CoA. The protein is Phosphate acyltransferase of Listeria monocytogenes serotype 4b (strain F2365).